The sequence spans 260 residues: MTDEPRNASIRMDALQAHHAEAAARWATRLGLPRVGETDFALQLGDQGLQLVELGDKAPGPVRVDFVEGAAAHRRQFGGGSGQMIAKAVGVQSGIRPRILDATAGLGRDAFVLASLGCEMTLIERQPLIAALLEDGLQRAELDLEVAPIAARMRLLTGNAIDLMQNWQGEAPQVIYLDPMFPHRDKSALVKKEMRLFRPFVGDDLDAPALLAAALALASHRVVVKRPRKAPAIEGTKPGYVLEGKSSRYDVYPKKKLEGA.

S-adenosyl-L-methionine-binding positions include Arg108 to Asp109, Glu124 to Arg125, and Asp178.

Belongs to the methyltransferase superfamily. RsmJ family.

The protein resides in the cytoplasm. It catalyses the reaction guanosine(1516) in 16S rRNA + S-adenosyl-L-methionine = N(2)-methylguanosine(1516) in 16S rRNA + S-adenosyl-L-homocysteine + H(+). Its function is as follows. Specifically methylates the guanosine in position 1516 of 16S rRNA. The sequence is that of Ribosomal RNA small subunit methyltransferase J from Ectopseudomonas mendocina (strain ymp) (Pseudomonas mendocina).